We begin with the raw amino-acid sequence, 498 residues long: MRINPTTSSPVVSTLEEKNLGRIAQIIGPVLDVVFPPGKMPNIYNALVVKGRDTVGQQINVTCEVQQLLGNNRVRAVAMSATDGLMRGMEVIDTGAPLSVPVGGATLGRIFNVLGEPVDNLGPVDTRTTSPIHRSAPAFIQLDTKLSIFETGIKVVDLLAPYRRGGKIGLFGGAGVGKTVLIMELINNIAKAHGGVSVFGGVGERTREGNDLYMEMKESGVINEKNIAESKVALVYGQMNEPPGARMRVGLTALTMAEYFRDVNEQDVLLFIDNIFRFVQAGSEVSALLGRMPSAVGYQPTLSTEMGSLQERITSTKEGSITSIQAVYVPADDLTDPAPATTFSHLDATTVLSRVLAAKGIYPAVDPLDSTSTMLQPRIVGEEHYETAQRVKQTSQRYKELQDIIAILGLDELSEEDRLTVARARKIERFLSQPFFVAEVFTGSPGKYVGLGETIRGFQLILSGELDGLPEQAFYLVGNIDEATAKAMNLEVESKLKK.

ATP is bound at residue 172–179 (GGAGVGKT).

The protein belongs to the ATPase alpha/beta chains family. F-type ATPases have 2 components, CF(1) - the catalytic core - and CF(0) - the membrane proton channel. CF(1) has five subunits: alpha(3), beta(3), gamma(1), delta(1), epsilon(1). CF(0) has four main subunits: a(1), b(1), b'(1) and c(9-12).

It is found in the plastid. It localises to the chloroplast thylakoid membrane. It carries out the reaction ATP + H2O + 4 H(+)(in) = ADP + phosphate + 5 H(+)(out). Functionally, produces ATP from ADP in the presence of a proton gradient across the membrane. The catalytic sites are hosted primarily by the beta subunits. The sequence is that of ATP synthase subunit beta, chloroplastic from Licuala grandis (Ruffled fan palm).